The primary structure comprises 697 residues: Alpha-1,4-glucan:maltose-1-phosphate maltosyltransferase (697 aa).

Lys-284 lines the alpha-maltose 1-phosphate pocket. The segment at 286-305 (RNNSVTAAPGDVGSPWAIGS) is disordered. Residues Gln-344 and Asp-379 each contribute to the alpha-maltose 1-phosphate site. Asp-414 (nucleophile) is an active-site residue. Asn-415 lines the alpha-maltose 1-phosphate pocket. Catalysis depends on Glu-443, which acts as the Proton donor. 553–554 (KY) contributes to the alpha-maltose 1-phosphate binding site.

Belongs to the glycosyl hydrolase 13 family. GlgE subfamily. In terms of assembly, homodimer.

The enzyme catalyses alpha-maltose 1-phosphate + [(1-&gt;4)-alpha-D-glucosyl](n) = [(1-&gt;4)-alpha-D-glucosyl](n+2) + phosphate. It functions in the pathway glycan biosynthesis; glycogen biosynthesis. With respect to regulation, the transfer reaction from maltose-1-P to glycogen is inhibited by micromolar amounts of inorganic phosphate or arsenate but is only slightly inhibited by millimolar concentrations of glucose-1-P, glucose-6-P, or inorganic pyrophosphate. Is also inhibited by ATP, by 1,4-dideoxy-1,4-imino-D-arabinitol (DIA), but not by isofagomine. Its function is as follows. Maltosyltransferase that uses maltose 1-phosphate (M1P) as the sugar donor to elongate linear or branched alpha-(1-&gt;4)-glucans. Is also able to catalyze the reverse reaction in vitro. Cannot use glucose 1-phosphate as substrate. Is involved in a branched alpha-glucan biosynthetic pathway from trehalose, together with TreS, Mak and GlgB. The protein is Alpha-1,4-glucan:maltose-1-phosphate maltosyltransferase (glgE) of Mycolicibacterium smegmatis (strain ATCC 700084 / mc(2)155) (Mycobacterium smegmatis).